A 477-amino-acid chain; its full sequence is Beta-agarase D (477 aa).

The signal sequence occupies residues 1–20; it reads MKRSILLAIIAFLQFFTSYG. The GH16 domain occupies 22–378; sequence YDWDNVPIPA…WIRVYKPVNA (357 aa). Residues 94 to 104, 123 to 125, Glu174, Glu179, Arg206, and Glu340 each bind substrate; these read MQNHVAVSGGN and NNT. Catalysis depends on Glu174, which acts as the Nucleophile. The active-site Proton donor is the Glu179. The segment covering 382–391 has biased composition (low complexity); the sequence is NSAETTSTVE. The interval 382-402 is disordered; sequence NSAETTSTVEKPASFEPQGQP.

It belongs to the glycosyl hydrolase 16 family.

The protein resides in the secreted. The catalysed reaction is Hydrolysis of (1-&gt;4)-beta-D-galactosidic linkages in agarose, giving the tetramer as the predominant product.. In terms of biological role, cleaves the beta-1,4-linkages between beta-D-galactose and alpha-L-3,6-anhydro-galactose residues in agarose. Cleaves agarose in a random manner with retention of the anomeric-bond configuration, producing beta-anomers that give rise progressively to alpha-anomers when mutarotation takes place. Requires at least 4 consecutive agarose units and is highly intolerant to modifications. In Zobellia galactanivorans (strain DSM 12802 / CCUG 47099 / CIP 106680 / NCIMB 13871 / Dsij), this protein is Beta-agarase D (agaD).